Here is a 208-residue protein sequence, read N- to C-terminus: Small ribosomal subunit protein uS5 (208 aa).

Residues 48 to 111 (LEDEVLDINM…DAAKLDITYI (64 aa)) form the S5 DRBM domain.

It belongs to the universal ribosomal protein uS5 family. As to quaternary structure, part of the 30S ribosomal subunit. Contacts protein S4.

In terms of biological role, with S4 and S12 plays an important role in translational accuracy. The sequence is that of Small ribosomal subunit protein uS5 from Methanosarcina barkeri (strain Fusaro / DSM 804).